A 429-amino-acid polypeptide reads, in one-letter code: Glutamate-1-semialdehyde 2,1-aminomutase 2 (429 aa).

The residue at position 268 (Lys-268) is an N6-(pyridoxal phosphate)lysine.

Belongs to the class-III pyridoxal-phosphate-dependent aminotransferase family. HemL subfamily. Homodimer. Pyridoxal 5'-phosphate is required as a cofactor.

The protein resides in the cytoplasm. The catalysed reaction is (S)-4-amino-5-oxopentanoate = 5-aminolevulinate. The protein operates within porphyrin-containing compound metabolism; protoporphyrin-IX biosynthesis; 5-aminolevulinate from L-glutamyl-tRNA(Glu): step 2/2. This is Glutamate-1-semialdehyde 2,1-aminomutase 2 from Halalkalibacterium halodurans (strain ATCC BAA-125 / DSM 18197 / FERM 7344 / JCM 9153 / C-125) (Bacillus halodurans).